A 227-amino-acid chain; its full sequence is Phosphoribosylformylglycinamidine synthase subunit PurQ (227 aa).

Residues 3–225 (FAVIVFPGSN…VKQGAHHVKT (223 aa)) enclose the Glutamine amidotransferase type-1 domain. Catalysis depends on cysteine 86, which acts as the Nucleophile. Residues histidine 194 and glutamate 196 contribute to the active site.

As to quaternary structure, part of the FGAM synthase complex composed of 1 PurL, 1 PurQ and 2 PurS subunits.

The protein resides in the cytoplasm. It catalyses the reaction N(2)-formyl-N(1)-(5-phospho-beta-D-ribosyl)glycinamide + L-glutamine + ATP + H2O = 2-formamido-N(1)-(5-O-phospho-beta-D-ribosyl)acetamidine + L-glutamate + ADP + phosphate + H(+). The enzyme catalyses L-glutamine + H2O = L-glutamate + NH4(+). It participates in purine metabolism; IMP biosynthesis via de novo pathway; 5-amino-1-(5-phospho-D-ribosyl)imidazole from N(2)-formyl-N(1)-(5-phospho-D-ribosyl)glycinamide: step 1/2. Its function is as follows. Part of the phosphoribosylformylglycinamidine synthase complex involved in the purines biosynthetic pathway. Catalyzes the ATP-dependent conversion of formylglycinamide ribonucleotide (FGAR) and glutamine to yield formylglycinamidine ribonucleotide (FGAM) and glutamate. The FGAM synthase complex is composed of three subunits. PurQ produces an ammonia molecule by converting glutamine to glutamate. PurL transfers the ammonia molecule to FGAR to form FGAM in an ATP-dependent manner. PurS interacts with PurQ and PurL and is thought to assist in the transfer of the ammonia molecule from PurQ to PurL. The chain is Phosphoribosylformylglycinamidine synthase subunit PurQ from Exiguobacterium sibiricum (strain DSM 17290 / CCUG 55495 / CIP 109462 / JCM 13490 / 255-15).